Consider the following 142-residue polypeptide: Putative phosphatidylglycerol/phosphatidylinositol transfer protein 2 (142 aa).

The N-terminal stretch at 1–20 (MKFYLYLSILLILLTSTSFG) is a signal peptide.

This sequence belongs to the NPC2 family. In terms of assembly, monomer.

Catalyzes the intermembrane transfer of phosphatidylglycerol and phosphatidylinositol. The chain is Putative phosphatidylglycerol/phosphatidylinositol transfer protein 2 from Dictyostelium discoideum (Social amoeba).